We begin with the raw amino-acid sequence, 487 residues long: Aspartyl/glutamyl-tRNA(Asn/Gln) amidotransferase subunit B (487 aa).

Belongs to the GatB/GatE family. GatB subfamily. As to quaternary structure, heterotrimer of A, B and C subunits.

It carries out the reaction L-glutamyl-tRNA(Gln) + L-glutamine + ATP + H2O = L-glutaminyl-tRNA(Gln) + L-glutamate + ADP + phosphate + H(+). The catalysed reaction is L-aspartyl-tRNA(Asn) + L-glutamine + ATP + H2O = L-asparaginyl-tRNA(Asn) + L-glutamate + ADP + phosphate + 2 H(+). In terms of biological role, allows the formation of correctly charged Asn-tRNA(Asn) or Gln-tRNA(Gln) through the transamidation of misacylated Asp-tRNA(Asn) or Glu-tRNA(Gln) in organisms which lack either or both of asparaginyl-tRNA or glutaminyl-tRNA synthetases. The reaction takes place in the presence of glutamine and ATP through an activated phospho-Asp-tRNA(Asn) or phospho-Glu-tRNA(Gln). This Chlamydia abortus (strain DSM 27085 / S26/3) (Chlamydophila abortus) protein is Aspartyl/glutamyl-tRNA(Asn/Gln) amidotransferase subunit B.